The primary structure comprises 687 residues: MAVQVLRQMVYFLLSLFSLVQGAHSGSPREDFRFCGQRNQTQQSTLHYDQSSEPHIFVWNTEETLTIRAPFLAAPDIPRFFPEPRGLYHFCLYWSRHTGRLHLRYGKHDYLLSSQASRLLCFQKQEQSLKQGAPLIATSVSSWQIPQNTSLPGAPSFIFSFHNAPHKVSHNASVDMCDLKKELQQLSRYLQHPQKAAKRPTAAFISQQLQSLESKLTSVSFLGDTLSFEEDRVNATVWKLPPTAGLEDLHIHSQKEEEQSEVQAYSLLLPRAVFQQTRGRRRDDAKRLLVVDFSSQALFQDKNSSQVLGEKVLGIVVQNTKVTNLSDPVVLTFQHQPQPKNVTLQCVFWVEDPASSSTGSWSSAGCETVSRDTQTSCLCNHLTYFAVLMVSSTEVEATHKHYLTLLSYVGCVISALACVFTIAAYLCSRRKSRDYTIKVHMNLLSAVFLLDVSFLLSEPVALTGSEAACRTSAMFLHFSLLACLSWMGLEGYNLYRLVVEVFGTYVPGYLLKLSIVGWGFPVFLVTLVALVDVNNYGPIILAVRRTPERVTYPSMCWIRDSLVSYVTNLGLFSLVFLFNLAMLATMVVQILRLRPHSQNWPHVLTLLGLSLVLGLPWALVFFSFASGTFQLVILYLFSIITSFQGFLIFLWYWSMRFQAQGGPSPLKNNSDSAKLPISSGSTSSSRI.

The signal sequence occupies residues 1–25; sequence MAVQVLRQMVYFLLSLFSLVQGAHS. 26 to 33 provides a ligand contact to heparin; it reads GSPREDFR. Topologically, residues 26-402 are extracellular; it reads GSPREDFRFC…TEVEATHKHY (377 aa). 2 disulfide bridges follow: C35–C91 and C121–C177. N-linked (GlcNAc...) asparagine glycosylation is found at N39, N148, and N171. 190-200 is a binding site for heparin; sequence LQHPQKAAKRP. One can recognise a GAIN-B domain in the interval 224–395; it reads DTLSFEEDRV…AVLMVSSTEV (172 aa). 4 N-linked (GlcNAc...) asparagine glycosylation sites follow: N234, N303, N324, and N341. 2 cysteine pairs are disulfide-bonded: C346–C377 and C366–C379. Residues 346–395 are GPS; it reads CVFWVEDPASSSTGSWSSAGCETVSRDTQTSCLCNHLTYFAVLMVSSTEV. Positions 384–397 are stachel; that stretch reads YFAVLMVSSTEVEA. A helical transmembrane segment spans residues 403–423; it reads LTLLSYVGCVISALACVFTIA. Topologically, residues 424-442 are cytoplasmic; it reads AYLCSRRKSRDYTIKVHMN. The helical transmembrane segment at 443–463 threads the bilayer; that stretch reads LLSAVFLLDVSFLLSEPVALT. Residues 464–471 lie on the Extracellular side of the membrane; it reads GSEAACRT. A helical transmembrane segment spans residues 472–492; sequence SAMFLHFSLLACLSWMGLEGY. Residues 493-512 are Cytoplasmic-facing; that stretch reads NLYRLVVEVFGTYVPGYLLK. The helical transmembrane segment at 513 to 533 threads the bilayer; the sequence is LSIVGWGFPVFLVTLVALVDV. The Extracellular segment spans residues 534-570; the sequence is NNYGPIILAVRRTPERVTYPSMCWIRDSLVSYVTNLG. The chain crosses the membrane as a helical span at residues 571 to 591; that stretch reads LFSLVFLFNLAMLATMVVQIL. Over 592-603 the chain is Cytoplasmic; it reads RLRPHSQNWPHV. The chain crosses the membrane as a helical span at residues 604 to 624; the sequence is LTLLGLSLVLGLPWALVFFSF. The Extracellular portion of the chain corresponds to 625–630; sequence ASGTFQ. A helical membrane pass occupies residues 631–651; it reads LVILYLFSIITSFQGFLIFLW. At 652–687 the chain is on the cytoplasmic side; that stretch reads YWSMRFQAQGGPSPLKNNSDSAKLPISSGSTSSSRI. Residues 664-687 form a disordered region; it reads SPLKNNSDSAKLPISSGSTSSSRI. The segment covering 678–687 has biased composition (low complexity); that stretch reads SSGSTSSSRI.

It belongs to the G-protein coupled receptor 2 family. LN-TM7 subfamily. As to quaternary structure, heterodimer of 2 chains generated by proteolytic processing; the large extracellular N-terminal fragment (ADGRG1 NT) and the membrane-bound C-terminal fragment (ADGRG1-CT) predominantly remain associated and non-covalently linked. ADGRG1 NT self-associates in a trans-trans manner; the homophilic interaction enhances receptor signaling. Interacts with TGM2. Interacts with heparin; leading to the reduction of ADGRG1 shedding. Interacts with COL3A1. Part of a GPCR-tetraspanin complex at least consisting of ADGRG1, CD81, eventually CD9, and GNA11 in which CD81 is enhancing the association of ADGRG1 with GNA11. Post-translationally, autoproteolytically cleaved into 2 fragments; the large extracellular N-terminal fragment and the membroune-bound C-terminal fragment predominantly remain associated and non-covalently linked. In terms of processing, N-glycosylated. The secreted ADGRG1 N-terminal fragment is heavily glycosylated. Ubiquitinated. Undergoes polyubiquitination upon activation. Expressed in neural progenitor cells in fetal forbrain. Expressed in migrating neurons. Expressed in radial glial endfeet (at protein level). Expressed in peritubular myoid cells, Sertoli cells, and germ cells of the testis.

It is found in the cell membrane. The protein localises to the secreted. The protein resides in the membrane raft. With respect to regulation, forms a heterodimer of 2 chains generated by proteolytic processing that remain associated through non-covalent interactions mediated by the GAIN-B domain. In the inactivated receptor, the Stachel sequence (also named stalk) is embedded in the GAIN-B domain, where it adopts a beta-strand conformation. On activation, the Stachel moves into the 7 transmembrane region and adopts a twisted hook-shaped configuration that forms contacts within the receptor, leading to coupling of a G-alpha protein, which activates signaling. The cleaved GAIN-B and N-terminal domains can then dissociate from the rest of the receptor. Activated by the small-molecule agonist, 3-alpha-acetoxydihydrodeoxygedunin (3-alpha-DOG). Functionally, adhesion G-protein coupled receptor (aGPCR) for steroid hormone 17alpha-hydroxypregnenolone (17-OH), which is involved in cell adhesion and cell-cell interactions. Ligand binding causes a conformation change that triggers signaling via guanine nucleotide-binding proteins (G proteins) and modulates the activity of downstream effectors, such as RhoA pathway. ADGRG1 is coupled to G(12) and/or G(13) G proteins (GNA12 and GNA13, respectively) and mediates the activation Rho small GTPases. Acts as a potent suppressor of ferroptosis: binding to 17-OH-binding initiates signaling that down-regulates CD36 and alleviates ferroptosis-induced liver injury. Ligand-binding also induces cell adhesion activity via association with proteins such as collagen III/COL3A1 and TGM2. Mediates cell matrix adhesion in developing neurons and hematopoietic stem cells. Involved in cortical development, specifically in maintenance of the pial basement membrane integrity and in cortical lamination: association with COL3A1 in the developing brain inhibits neuronal migration via activation of the RhoA pathway. Together with TGM2, acts as a regulator of myelination and myelin repair in oligodendrocyte precursor cells. Acts as a hemostatic sensor of shear force: G protein-coupled receptor signaling is activated in response to shear force in platelets, promoting G(13) G protein signaling, and platelet shape change and aggregation in a COL3A1-dependent manner. Acts as an inhibitor of VEGFA production thereby inhibiting angiogenesis through a signaling pathway mediated by PRKCA. Plays a role in the maintenance of hematopoietic stem cells in bone marrow niche. Plays an essential role in testis development. Its function is as follows. Adhesion G-protein coupled receptor (aGPCR) for phosphatidylserine, which is involved in microglia-mediated synapse pruning during development. Required to maintain appropriate synaptic numbers in several brain regions in a time- and circuit-dependent fashion: phosphatidylserine-binding acts as a 'eat-me' signal for apoptotic cells, leading to microglial engulfment of phosphatidylserine-positive synapses. The sequence is that of Adhesion G-protein coupled receptor G1 from Mus musculus (Mouse).